A 173-amino-acid chain; its full sequence is Ribosome maturation factor RimM (173 aa).

The PRC barrel domain maps to 98–170 (EDEYYWCDLL…RMTVSLPEGL (73 aa)).

Belongs to the RimM family. In terms of assembly, binds ribosomal protein uS19.

The protein localises to the cytoplasm. Its function is as follows. An accessory protein needed during the final step in the assembly of 30S ribosomal subunit, possibly for assembly of the head region. Essential for efficient processing of 16S rRNA. May be needed both before and after RbfA during the maturation of 16S rRNA. It has affinity for free ribosomal 30S subunits but not for 70S ribosomes. The sequence is that of Ribosome maturation factor RimM from Geotalea uraniireducens (strain Rf4) (Geobacter uraniireducens).